The following is a 131-amino-acid chain: Large ribosomal subunit protein bL17 (131 aa).

Belongs to the bacterial ribosomal protein bL17 family. Part of the 50S ribosomal subunit. Contacts protein L32.

This Sodalis glossinidius (strain morsitans) protein is Large ribosomal subunit protein bL17.